We begin with the raw amino-acid sequence, 414 residues long: Isocitrate dehydrogenase [NADP] cytoplasmic (414 aa).

S2 is modified (N-acetylserine). Y42 carries the phosphotyrosine modification. Residue 75 to 77 (TIT) coordinates NADP(+). T77 serves as a coordination point for substrate. An N6-acetyllysine modification is found at K81. R82 provides a ligand contact to NADP(+). Substrate is bound by residues 94 to 100 (SPNGTIR) and R109. K126 carries the post-translational modification N6-succinyllysine. Residues R132 and K212 each coordinate substrate. An N6-acetyllysine mark is found at K224 and K233. A Mn(2+)-binding site is contributed by D252. K260 is an NADP(+) binding site. Mn(2+)-binding residues include D275 and D279. An NADP(+)-binding site is contributed by 310–315 (GTVTRH). At K321 the chain carries N6-acetyllysine. Residue N328 participates in NADP(+) binding. S389 carries the post-translational modification Phosphoserine. Residue K400 is modified to N6-succinyllysine.

Belongs to the isocitrate and isopropylmalate dehydrogenases family. In terms of assembly, homodimer. The cofactor is Mg(2+). Requires Mn(2+) as cofactor. Post-translationally, acetylation at Lys-374 dramatically reduces catalytic activity. Expressed preferentially in corneal epithelium. Constitute approximately 13% of the total soluble bovine corneal epithelial proteins.

The protein resides in the cytoplasm. It is found in the cytosol. The catalysed reaction is D-threo-isocitrate + NADP(+) = 2-oxoglutarate + CO2 + NADPH. In terms of biological role, catalyzes the NADP(+)-dependent oxidative decarboxylation of isocitrate (D-threo-isocitrate) to 2-ketoglutarate (2-oxoglutarate), which is required by other enzymes such as the phytanoyl-CoA dioxygenase. Plays a critical role in the generation of NADPH, an important cofactor in many biosynthesis pathways. May act as a corneal epithelial crystallin and may be involved in maintaining corneal epithelial transparency. The chain is Isocitrate dehydrogenase [NADP] cytoplasmic (IDH1) from Bos taurus (Bovine).